A 698-amino-acid chain; its full sequence is Elongation factor G 2 (698 aa).

Positions glutamate 8 to valine 290 constitute a tr-type G domain. Residues alanine 17–threonine 24, aspartate 88–histidine 92, and asparagine 142–aspartate 145 each bind GTP.

Belongs to the TRAFAC class translation factor GTPase superfamily. Classic translation factor GTPase family. EF-G/EF-2 subfamily.

It is found in the cytoplasm. Its function is as follows. Catalyzes the GTP-dependent ribosomal translocation step during translation elongation. During this step, the ribosome changes from the pre-translocational (PRE) to the post-translocational (POST) state as the newly formed A-site-bound peptidyl-tRNA and P-site-bound deacylated tRNA move to the P and E sites, respectively. Catalyzes the coordinated movement of the two tRNA molecules, the mRNA and conformational changes in the ribosome. The sequence is that of Elongation factor G 2 from Methylococcus capsulatus (strain ATCC 33009 / NCIMB 11132 / Bath).